The chain runs to 130 residues: C-type natriuretic peptide 2 (130 aa).

The N-terminal stretch at Met-1–Pro-22 is a signal peptide. A propeptide spanning residues Arg-23–Arg-103 is cleaved from the precursor. Residues Glu-57 to Arg-77 are disordered. Cysteines 114 and 130 form a disulfide.

It belongs to the natriuretic peptide family.

Its subcellular location is the secreted. Its function is as follows. Exhibits natriuretic and vasodepressant activity. Has cGMP-stimulating activity. May help to regulate body fluid homeostasis in a variety of aquatic environments. This Takifugu rubripes (Japanese pufferfish) protein is C-type natriuretic peptide 2.